A 284-amino-acid chain; its full sequence is Type II methyltransferase M1.LlaDCHI (284 aa).

Residues tryptophan 17, lysine 21, aspartate 62, and aspartate 194 each coordinate S-adenosyl-L-methionine.

It belongs to the N(4)/N(6)-methyltransferase family.

The catalysed reaction is a 2'-deoxyadenosine in DNA + S-adenosyl-L-methionine = an N(6)-methyl-2'-deoxyadenosine in DNA + S-adenosyl-L-homocysteine + H(+). In terms of biological role, an alpha subtype methylase, recognizes the double-stranded sequence 5'-GATC-3', methylates A-2 on both strands, and protects the DNA from cleavage by the LlaDCHI endonuclease. The polypeptide is Type II methyltransferase M1.LlaDCHI (Lactococcus lactis subsp. cremoris (Streptococcus cremoris)).